The chain runs to 383 residues: UDP-N-acetylglucosamine--N-acetylmuramyl-(pentapeptide) pyrophosphoryl-undecaprenol N-acetylglucosamine transferase (383 aa).

Residues threonine 11–glycine 13, asparagine 125, arginine 166, serine 191, isoleucine 246, and glutamine 291 contribute to the UDP-N-acetyl-alpha-D-glucosamine site. Positions proline 364–serine 383 are disordered. The span at glycine 366–serine 383 shows a compositional bias: basic and acidic residues.

Belongs to the glycosyltransferase 28 family. MurG subfamily.

The protein localises to the cell inner membrane. The enzyme catalyses di-trans,octa-cis-undecaprenyl diphospho-N-acetyl-alpha-D-muramoyl-L-alanyl-D-glutamyl-meso-2,6-diaminopimeloyl-D-alanyl-D-alanine + UDP-N-acetyl-alpha-D-glucosamine = di-trans,octa-cis-undecaprenyl diphospho-[N-acetyl-alpha-D-glucosaminyl-(1-&gt;4)]-N-acetyl-alpha-D-muramoyl-L-alanyl-D-glutamyl-meso-2,6-diaminopimeloyl-D-alanyl-D-alanine + UDP + H(+). It participates in cell wall biogenesis; peptidoglycan biosynthesis. Cell wall formation. Catalyzes the transfer of a GlcNAc subunit on undecaprenyl-pyrophosphoryl-MurNAc-pentapeptide (lipid intermediate I) to form undecaprenyl-pyrophosphoryl-MurNAc-(pentapeptide)GlcNAc (lipid intermediate II). In Myxococcus xanthus (strain DK1622), this protein is UDP-N-acetylglucosamine--N-acetylmuramyl-(pentapeptide) pyrophosphoryl-undecaprenol N-acetylglucosamine transferase.